We begin with the raw amino-acid sequence, 261 residues long: MGFLQGKKILITGMISERSIAYGIAKACREQGAELAFTYVVDKLEERVRKMAAELDSELVFRCDVASDDEINQVFADLGKHWDGLDGLVHSIGFAPKEALSGDFLDSISREAFNTAHEISAYSLPALAKAARPMMRGRNSAIVALSYLGAVRAIPNYNVMGMAKASLEAGIRFTAACLGKEGIRCNGISAGPIKTLAASGIADFGKLLGHVAAHNPLRRNVTIEEVGNTAAFLLSDLSSGITGEITYVDGGYSINALSTEG.

Residues Gly-13, Ser-19–Ile-20, Asp-64–Val-65, and Ile-92 each bind NAD(+). Residue Ala-95 coordinates substrate. Active-site proton acceptor residues include Tyr-147 and Tyr-157. Residues Lys-164 and Ile-193–Ala-197 each bind NAD(+).

It belongs to the short-chain dehydrogenases/reductases (SDR) family. FabI subfamily. In terms of assembly, homotetramer.

The catalysed reaction is a 2,3-saturated acyl-[ACP] + NAD(+) = a (2E)-enoyl-[ACP] + NADH + H(+). The protein operates within lipid metabolism; fatty acid biosynthesis. Its function is as follows. Catalyzes the reduction of a carbon-carbon double bond in an enoyl moiety that is covalently linked to an acyl carrier protein (ACP). Involved in the elongation cycle of fatty acid which are used in the lipid metabolism. The protein is Enoyl-[acyl-carrier-protein] reductase [NADH] FabI (fabI) of Neisseria meningitidis serogroup B (strain ATCC BAA-335 / MC58).